The primary structure comprises 293 residues: tRNA pseudouridine synthase A (293 aa).

Residue Asp-60 is the Nucleophile of the active site. Residue Tyr-118 coordinates substrate.

It belongs to the tRNA pseudouridine synthase TruA family. As to quaternary structure, homodimer.

It carries out the reaction uridine(38/39/40) in tRNA = pseudouridine(38/39/40) in tRNA. In terms of biological role, formation of pseudouridine at positions 38, 39 and 40 in the anticodon stem and loop of transfer RNAs. In Rippkaea orientalis (strain PCC 8801 / RF-1) (Cyanothece sp. (strain PCC 8801)), this protein is tRNA pseudouridine synthase A.